We begin with the raw amino-acid sequence, 412 residues long: Phosphoglycerate kinase 1 (412 aa).

Substrate is bound by residues 28–30 (DFN), 65–68 (HQGR), arginine 122, and arginine 162. Residues glutamate 336 and 361-364 (GGHT) contribute to the ATP site.

Belongs to the phosphoglycerate kinase family. As to quaternary structure, monomer.

Its subcellular location is the cytoplasm. It catalyses the reaction (2R)-3-phosphoglycerate + ATP = (2R)-3-phospho-glyceroyl phosphate + ADP. It functions in the pathway carbohydrate degradation; glycolysis; pyruvate from D-glyceraldehyde 3-phosphate: step 2/5. This chain is Phosphoglycerate kinase 1, found in Methanosarcina acetivorans (strain ATCC 35395 / DSM 2834 / JCM 12185 / C2A).